The chain runs to 184 residues: MGNDIEFNVFQKCWTISNDFGLNTDLLETNLINLGIVISLLIYFGKGVLSNLLRNRKLAISNTIRDAEERYKEATQKLEQAKIRLEQAEMKARNIRTSGLSQMEKEKKDLIDGTNGDLRRLEDSKNATIRSEKQRAIEQVQQQVSRSALERTLETLKNCLDNELHLRMIDHNIGLLRAMESVTD.

Residues 31-53 form a helical membrane-spanning segment; that stretch reads LINLGIVISLLIYFGKGVLSNLL.

Belongs to the ATPase B chain family. As to quaternary structure, F-type ATPases have 2 components, F(1) - the catalytic core - and F(0) - the membrane proton channel. F(1) has five subunits: alpha(3), beta(3), gamma(1), delta(1), epsilon(1). F(0) has four main subunits: a(1), b(1), b'(1) and c(10-14). The alpha and beta chains form an alternating ring which encloses part of the gamma chain. F(1) is attached to F(0) by a central stalk formed by the gamma and epsilon chains, while a peripheral stalk is formed by the delta, b and b' chains.

Its subcellular location is the plastid. The protein localises to the chloroplast thylakoid membrane. Its function is as follows. F(1)F(0) ATP synthase produces ATP from ADP in the presence of a proton or sodium gradient. F-type ATPases consist of two structural domains, F(1) containing the extramembraneous catalytic core and F(0) containing the membrane proton channel, linked together by a central stalk and a peripheral stalk. During catalysis, ATP synthesis in the catalytic domain of F(1) is coupled via a rotary mechanism of the central stalk subunits to proton translocation. Component of the F(0) channel, it forms part of the peripheral stalk, linking F(1) to F(0). This chain is ATP synthase subunit b, chloroplastic, found in Aneura mirabilis (Parasitic liverwort).